The following is a 201-amino-acid chain: Imidazole glycerol phosphate synthase subunit HisH (201 aa).

The Glutamine amidotransferase type-1 domain occupies 1–201 (MVFIADYGAG…LQVLRNFAEC (201 aa)). C79 serves as the catalytic Nucleophile. Active-site residues include H183 and E185.

Heterodimer of HisH and HisF.

Its subcellular location is the cytoplasm. It catalyses the reaction 5-[(5-phospho-1-deoxy-D-ribulos-1-ylimino)methylamino]-1-(5-phospho-beta-D-ribosyl)imidazole-4-carboxamide + L-glutamine = D-erythro-1-(imidazol-4-yl)glycerol 3-phosphate + 5-amino-1-(5-phospho-beta-D-ribosyl)imidazole-4-carboxamide + L-glutamate + H(+). It carries out the reaction L-glutamine + H2O = L-glutamate + NH4(+). It functions in the pathway amino-acid biosynthesis; L-histidine biosynthesis; L-histidine from 5-phospho-alpha-D-ribose 1-diphosphate: step 5/9. Its function is as follows. IGPS catalyzes the conversion of PRFAR and glutamine to IGP, AICAR and glutamate. The HisH subunit catalyzes the hydrolysis of glutamine to glutamate and ammonia as part of the synthesis of IGP and AICAR. The resulting ammonia molecule is channeled to the active site of HisF. The protein is Imidazole glycerol phosphate synthase subunit HisH of Chlorobium luteolum (strain DSM 273 / BCRC 81028 / 2530) (Pelodictyon luteolum).